Reading from the N-terminus, the 434-residue chain is Prenyltransferase penG (434 aa).

Composition is skewed to polar residues over residues 1 to 14 (MTQD…QTAG) and 21 to 35 (THSN…PSTW). A disordered region spans residues 1-35 (MTQDVVTVSSQTAGTIKESGTHSNPDNKTTSPSTW). L-tryptophan contacts are provided by residues 104–105 (EI) and E108. Substrate is bound by residues R122, K208, R275, K277, Y279, and Y348.

The protein belongs to the tryptophan dimethylallyltransferase family.

It carries out the reaction yaequinolone E + dimethylallyl diphosphate + H2O = [(1'E)-3'-hydroxy-3',7'-dimethylocta-1',6'-dien-1'-yl]-quinolinone B + diphosphate. It participates in secondary metabolite biosynthesis. It functions in the pathway alkaloid biosynthesis. The protein operates within mycotoxin biosynthesis. Functionally, prenyltransferase; part of the gene cluster that mediates the biosynthesis of penigequinolones, potent insecticidal alkaloids that contain a highly modified 10-carbon prenyl group. The first stage is catalyzed by the nonribosomal peptide synthetase penN that condenses anthranilic acid and O-methyl-L-tyrosine to produce 4'-methoxycyclopeptin. 4'-methoxycyclopeptin is then converted to 4'-methoxydehydrocyclopeptin by the ketoglutarate-dependent dioxygenase penM through dehydrogenation to form a double bond between C-alpha and C-beta of the O-methyltyrosine side chain. PenM also converts its first product methoxydehydrocyclopeptin to 4'-methoxycyclopenin. The following conversion of 4'methoxycyclopenin into 4'-methoxyviridicatin is catalyzed by the cyclopenase penL. 4'-methoxyviridicatin is the precursor of quinolone natural products, and is further converted to quinolinone B. The prenyltransferase penI then catalyzes the canonical Friedel-Crafts alkylation of quinolinone B with dimethylallyl cation to yield dimethylallyl quinolone, which is subjected to FAD-dependent dehydrogenation by the FAD-linked oxidoreductase penH to yield conjugated aryl diene. The delta(3') double bond then serves as the site of the second alkylation with DMAPP catalyzed by the prenyltransferase penG to yield a carbenium ion intermediate, which can be attacked by H(2)O to yield a styrenyl quinolone containing a C3'-hydroxyprenyl chain, or undergo cyclization to yield yaequinolones J1 and J2. The conversion of the styrenyl quinolone into the tetrahydrofuran-containing yaequinolone C is performed by the FAD-dependent monooxygenase penE and involves epoxidation of the terminal C7'-C8' olefin, followed by epoxide ring opening initiated by the C3' hydroxyl group. The predicted cysteine hydrolase penJ acts as an epoxide hydrolase that enhances the rate of the 5-exo-tet cyclization step, increasing the yield of yaequinolone C. PenF catalyzes the cationic rearrangement of the epoxide formed by penE (before ring opening to produce yaequinolone C) into yaequinolone D. Finally, the short-chain dehydrogenase/reductase (SDR)-like reductase penD, catalyzes both the dehydration of yaequinolone D and the reduction of the resulting oxonium to yield penigequinolone. The protein is Prenyltransferase penG of Penicillium thymicola.